A 1149-amino-acid chain; its full sequence is MWRFPLILASVCWLTTAQQQNVANDPDKKLASFDACKADIHKHCSRPDVDLTSDMSILECLQDAGFSETATLSEQCEQLVWDFKVKITQDERFVSAAKQYCEEELKGNAAMNLCTSQTQPGFALSCLMEFTKNVTETGKCHAFLARTERLAFSDFRLVGPFVTKCRAILDKFKCNVLTPDPAHKGVRVAHTQGMALECILDKVVKNAKTQADALQILGDDCKHEVLRLAEMQADDFHLDRPLFFACRLDRERYCKDVPSGEGKVFECLMMNRNDKFMDPECGNLLAERAYLMGRDYRMAHPLTKACQPELTRYKCEPQNQIESAAHFHLAWILLCLENGANQPEHKEVQPSKECAHEMITHRQMMMQHFRMAPELVLNCAQEIDKWCSPRGDIEAEGRTLHCLMEHAESRNETLKLGAQCLQAVQQVVKVADIGRNYKVDKVLYGSCRSLIDGPCAQDAVSETATLTCLMRNVDSPDMVPECEKRLLEVQYFMARDWTMDPQLYEACHQEAVSRCSALDNWHQQHNSDNTVDRGPQVLACLYRSAYDEQNPLSVKCGTQVRQLLHVRAVRVNLIPEIEDSCREALSEFCSHNVKPSEEMMCLQQNFETDNFKRKHPQCFAELTKFTEMEAKDTKLNRALSKACKPVISTHCAQFANEEIDHGDVLECLVNNKDAKEMNNKCRSYVNHFELISLRDYHFSYKFQKACASDIEQSCKGHNNDKGEIIRCLSEVRFEHKVLGSPKDLTDDCKKQLKVAYLQQEQVEFDDKEHMADADPKLSQKCEQEIKMYKCNQADTFEDTIECLRLNFEHLGPECKSMIFYREKIEAVDNSMDDELQKKCRYDIGKFCANSDSENVLECLTNTKIVRLLQRECKAIVKERMQESARDVRLRPQLLTSCRKEAEQYCPEDMKKINMPQYSQTVLDGVVVSCLRDKFRQSISDQNHIDFSPRCSAEVSRAIVEAEFDPQLDPPLYNACKSTINDHCSATIMESGGHFDNVMECLKNDFNKGLIRDKQCSEQVARRLQESLVDIHLDPVLHEACAMDIQRYCRDVPPGHSRIVMCLMDSADKQELSKECSTKLSDRNKLWMKAHSEFQMALPDSWHAFANLVMEHPERNSILGYLAGFIVFILLIGCCCGRVSKKQYIEMKNR.

The first 19 residues, 1 to 19, serve as a signal peptide directing secretion; it reads MWRFPLILASVCWLTTAQQ. Residues 20-1115 lie on the Extracellular side of the membrane; it reads QNVANDPDKK…NLVMEHPERN (1096 aa). Cys-rich GLG1 repeat units lie at residues 24–69, 71–135, 139–207, 216–276, 277–344, 349–411, 415–475, 477–549, 551–610, 613–676, 677–736, 743–803, 809–867, 868–938, 945–1009, and 1010–1070; these read NDPD…FSET, TLSE…KNVT, KCHA…VKNA, ILGD…NDKF, MDPE…NQPE, QPSK…ESRN, KLGA…NVDS, DMVP…YDEQ, PLSV…ETDN, RKHP…DAKE, MNNK…FEHK, DLTD…IECL, HLGP…IVRL, LQRE…RQSI, DFSP…NKGL, and IRDK…DKQE. Residue Asn-133 is glycosylated (N-linked (GlcNAc...) asparagine). Residue Asn-411 is glycosylated (N-linked (GlcNAc...) asparagine). The helical transmembrane segment at 1116 to 1136 threads the bilayer; it reads SILGYLAGFIVFILLIGCCCG. Over 1137–1149 the chain is Cytoplasmic; sequence RVSKKQYIEMKNR.

The protein localises to the membrane. The chain is Golgi apparatus protein 1 homolog from Caenorhabditis elegans.